A 138-amino-acid polypeptide reads, in one-letter code: ATP synthase epsilon chain (138 aa).

Belongs to the ATPase epsilon chain family. In terms of assembly, F-type ATPases have 2 components, CF(1) - the catalytic core - and CF(0) - the membrane proton channel. CF(1) has five subunits: alpha(3), beta(3), gamma(1), delta(1), epsilon(1). CF(0) has four main subunits: a(1), b(1), b'(1) and c(9-12).

Its subcellular location is the cellular thylakoid membrane. Produces ATP from ADP in the presence of a proton gradient across the membrane. Functionally, the complex from the organism is particularly stable to disruption and remains functional after 6 hours at 55 degrees Celsius. This chain is ATP synthase epsilon chain, found in Thermosynechococcus vestitus (strain NIES-2133 / IAM M-273 / BP-1).